A 444-amino-acid polypeptide reads, in one-letter code: NAD(P)-specific glutamate dehydrogenase (444 aa).

Substrate contacts are provided by Lys-88, Gln-109, and Lys-112. The active-site Proton donor is Lys-124. Gly-163 contributes to the substrate binding site. Positions 207 and 238 each coordinate NADP(+). Ser-376 is a binding site for substrate.

Belongs to the Glu/Leu/Phe/Val dehydrogenases family. As to quaternary structure, homohexamer.

It carries out the reaction L-glutamate + NAD(+) + H2O = 2-oxoglutarate + NH4(+) + NADH + H(+). It catalyses the reaction L-glutamate + NADP(+) + H2O = 2-oxoglutarate + NH4(+) + NADPH + H(+). Its function is as follows. Catalyzes the reversible oxidative deamination of glutamate to alpha-ketoglutarate and ammonia. P.ruminicola possess both NADP(H)- and NAD(H)-dependent activities on the same enzyme, suggesting that both anabolic and catabolic forms of the enzyme might occur. This is NAD(P)-specific glutamate dehydrogenase (gdhA) from Xylanibacter ruminicola (Prevotella ruminicola).